The primary structure comprises 514 residues: Arabinose import ATP-binding protein AraG (514 aa).

2 consecutive ABC transporter domains span residues 16–251 (LRFN…MVGR) and 251–507 (RDIQ…LPRH). 48–55 (GENGAGKS) contributes to the ATP binding site.

It belongs to the ABC transporter superfamily. Arabinose importer (TC 3.A.1.2.2) family. In terms of assembly, the complex is composed of two ATP-binding proteins (AraG), two transmembrane proteins (AraH) and a solute-binding protein (AraF).

Its subcellular location is the cell inner membrane. The catalysed reaction is L-arabinose(out) + ATP + H2O = L-arabinose(in) + ADP + phosphate + H(+). Functionally, part of the ABC transporter complex AraFGH involved in arabinose import. Responsible for energy coupling to the transport system. In Pseudomonas fluorescens (strain Pf0-1), this protein is Arabinose import ATP-binding protein AraG.